A 202-amino-acid polypeptide reads, in one-letter code: MSYLGVGVSPGNVPVYHGTNSKVIDRRVRLAELVLRCVICCLGVLAAVLVGTDTQVKEIFSIQKKARFTDMKALVFLVAANGIAAAYSFVQGVRCVVGMVKGSVLFSKPLAWVIFSGDQMMAYLTMSAVAAAAQSSVFAKLGQPDLQWMKICTMYGKFCNQVGEGIASALLVSVSMVVLSCISAFSLFRLYGGNKGKDGARW.

The Cytoplasmic portion of the chain corresponds to 1 to 29; that stretch reads MSYLGVGVSPGNVPVYHGTNSKVIDRRVR. A helical transmembrane segment spans residues 30–50; sequence LAELVLRCVICCLGVLAAVLV. At 51-72 the chain is on the extracellular side; the sequence is GTDTQVKEIFSIQKKARFTDMK. The chain crosses the membrane as a helical span at residues 73-93; it reads ALVFLVAANGIAAAYSFVQGV. Residues 94-109 are Cytoplasmic-facing; the sequence is RCVVGMVKGSVLFSKP. Residues 110-132 form a helical membrane-spanning segment; sequence LAWVIFSGDQMMAYLTMSAVAAA. The Extracellular portion of the chain corresponds to 133–164; it reads AQSSVFAKLGQPDLQWMKICTMYGKFCNQVGE. Residues 165 to 185 form a helical membrane-spanning segment; it reads GIASALLVSVSMVVLSCISAF. Residues 186 to 202 are Cytoplasmic-facing; that stretch reads SLFRLYGGNKGKDGARW.

This sequence belongs to the Casparian strip membrane proteins (CASP) family. Homodimer and heterodimers.

The protein localises to the cell membrane. This is CASP-like protein 2B1 from Populus trichocarpa (Western balsam poplar).